Reading from the N-terminus, the 330-residue chain is Uracil-DNA glycosylase, mitochondrial (330 aa).

Residues 1 to 49 constitute a mitochondrion transit peptide; it reads MASSTPKTLMDFFQPAKRLKASPSSSSFPAVSVAGGSRDLGSVANSPPR. D173 serves as the catalytic Proton acceptor.

This sequence belongs to the uracil-DNA glycosylase (UDG) superfamily. UNG family.

It is found in the mitochondrion. It carries out the reaction Hydrolyzes single-stranded DNA or mismatched double-stranded DNA and polynucleotides, releasing free uracil.. Inhidited by the small peptide uracil-DNA-glycosylase inhibitor (Ugi). Functionally, excises uracil residues from the DNA which can arise as a result of misincorporation of dUMP residues by DNA polymerase or due to deamination of cytosine. More active on U:G, U:T and U:C mispairs than on U:A pairs. Highly specific for uracil and no activity with 5-substituted uracil or cytosine derivatives. Required for initiation of base excision repair (BER) of uracil. This Arabidopsis thaliana (Mouse-ear cress) protein is Uracil-DNA glycosylase, mitochondrial.